Here is a 652-residue protein sequence, read N- to C-terminus: MLDTIARALQDLGRQVLPTLPSLSQEEVSIIWGNVSEFVRRQLTLHKGVQIPAFGTFTFIRQKLEVGNNKFILIQRPVFIMVEKLVQIHGLKQNKVYTPGEIPIVPLNFVMISLEGPFNRDVVEGCVKETLLFLSRSISMKQNVEFTFKGIGVLMIRDSKVKMRFYKDFLCTMDGSGALAKALANRPGTVDSVLSSREALRKWPSSVLAFPRIELKEMENKLPMETLVEECGENRERKCKLKDQSDKEEGTRDISSPKRLRDRQALFPAKVTNVSLLEKFERSESGGKIMTPESLSYPSCLKHDSEMKPQTSPACQDHNKAGQEMCYVCLQRAQRNSLLYYSEERRREIEDERLIQQYQMLKDQEALFRHQMKSLATREQNQKNAAYNLGVAEAIRNHKNEKPEFYKSFLFDKRPLSPALNALKQEEYSRSLLKQMDNRQENEIKQRQYRELMDRLEQVQLTEELAAQRAKFLKDKMEETQCYKRALDAQIKNKPSRLPPFEPDSSEPIFGKNEGELMVEKQKREQNYMKHQLEAAANHKRKAILHQLVDQRRDLQMLQRTQREHLADRTAELERVNRVNQCLQEDWERSAAMKKQRDLEDKAFERASDKLFLLDQCEKYRRCKQCQRRTSNVGESNLWPLNKFLPGSRLLV.

Phosphoserine is present on Ser-206. A compositionally biased stretch (basic and acidic residues) spans 238 to 256 (KCKLKDQSDKEEGTRDISS). The disordered stretch occupies residues 238 to 258 (KCKLKDQSDKEEGTRDISSPK). Residues Ser-275, Ser-296, and Ser-417 each carry the phosphoserine modification. The stretch at 436–493 (MDNRQENEIKQRQYRELMDRLEQVQLTEELAAQRAKFLKDKMEETQCYKRALDAQIKN) forms a coiled coil.

It is found in the cytoplasm. It localises to the cytoskeleton. The protein localises to the microtubule organizing center. Its subcellular location is the centrosome. The sequence is that of Coiled-coil domain-containing protein 81 (CCDC81) from Homo sapiens (Human).